Consider the following 302-residue polypeptide: Giardin subunit alpha-5 (302 aa).

4 Annexin repeats span residues 1 to 72 (MTST…VNMW), 74 to 144 (SRHE…VAGW), 153 to 226 (GSVE…AAHF), and 230 to 298 (GLPV…TLWR).

It belongs to the annexin family. Giardin subunit alpha subfamily.

The protein localises to the cytoplasm. It localises to the cytoskeleton. Its function is as follows. Giardins are involved in parasite attachment to the intestinal mucosa and in the cytoskeletal disassembly and reassembly that marks the transition from infectious trophozoite to transmissible cyst. They may interact with other cytoskeletal proteins such as microtubules in the microribbons or crossbridges, to maintain the integrity of the ventral disk. The protein is Giardin subunit alpha-5 of Giardia intestinalis (Giardia lamblia).